The chain runs to 245 residues: Type II restriction enzyme MjaIV (245 aa).

It carries out the reaction Endonucleolytic cleavage of DNA to give specific double-stranded fragments with terminal 5'-phosphates.. Its function is as follows. A P subtype restriction enzyme that recognizes the double-stranded sequence 5'-GTNNAC-3'; the cleavage site is unknown. This chain is Type II restriction enzyme MjaIV (mjaIVR), found in Methanocaldococcus jannaschii (strain ATCC 43067 / DSM 2661 / JAL-1 / JCM 10045 / NBRC 100440) (Methanococcus jannaschii).